The primary structure comprises 184 residues: ATP synthase subunit b, chloroplastic (184 aa).

The chain crosses the membrane as a helical span at residues 27-49; the sequence is LATNPINLSVVLGVLIFFGKGVL.

The protein belongs to the ATPase B chain family. F-type ATPases have 2 components, F(1) - the catalytic core - and F(0) - the membrane proton channel. F(1) has five subunits: alpha(3), beta(3), gamma(1), delta(1), epsilon(1). F(0) has four main subunits: a(1), b(1), b'(1) and c(10-14). The alpha and beta chains form an alternating ring which encloses part of the gamma chain. F(1) is attached to F(0) by a central stalk formed by the gamma and epsilon chains, while a peripheral stalk is formed by the delta, b and b' chains.

Its subcellular location is the plastid. The protein localises to the chloroplast thylakoid membrane. F(1)F(0) ATP synthase produces ATP from ADP in the presence of a proton or sodium gradient. F-type ATPases consist of two structural domains, F(1) containing the extramembraneous catalytic core and F(0) containing the membrane proton channel, linked together by a central stalk and a peripheral stalk. During catalysis, ATP synthesis in the catalytic domain of F(1) is coupled via a rotary mechanism of the central stalk subunits to proton translocation. Its function is as follows. Component of the F(0) channel, it forms part of the peripheral stalk, linking F(1) to F(0). The sequence is that of ATP synthase subunit b, chloroplastic from Chloranthus spicatus (Chulantree).